The primary structure comprises 362 residues: Transcription factor Sox-18 (362 aa).

Over residues 1–13 (MHRPEPSYCREEP) the composition is skewed to basic and acidic residues. The interval 1 to 68 (MHRPEPSYCR…CEEKPGDPRI (68 aa)) is disordered. The span at 37-51 (PSSPPAPDSPTPSPQ) shows a compositional bias: pro residues. Basic and acidic residues predominate over residues 59–68 (CEEKPGDPRI). A DNA-binding region (HMG box) is located at residues 68 to 136 (IRRPMNAFMV…QHLQDHPNYK (69 aa)). Interaction with DNA regions lie at residues 70 to 83 (RPMNAFMVWAKDER) and 94 to 106 (HNAVLSKMLGQSW). A disordered region spans residues 129 to 159 (LQDHPNYKYRPRRKKQAKKLKRVDPSPLLRN). Over residues 135-149 (YKYRPRRKKQAKKLK) the composition is skewed to basic residues. The interval 149–209 (KRVDPSPLLR…VVEPSEPAFF (61 aa)) is important for transcriptional activation. Residues 235 to 361 (KTLREISLPY…TAMYYTPCIT (127 aa)) form the Sox C-terminal domain. Residues 307–315 (NEFDQYLNM) carry the 9aaTAD motif.

The protein localises to the nucleus. Functionally, transcription factor. Binds to the consensus DNA sequence 5'-AACAAT-3'. Also binds 5'-CACAAT-3' and 5'-AATAAT-3' but with a lower affinity. Acts partially redundantly with sox7 during cardiogenesis, acting indirectly through nodal-signaling to induce mesodermal, organizer and endodermal tissues, which then interact to initiate cardiogenesis. Also acts as an antagonist of beta-catenin signaling. The chain is Transcription factor Sox-18 from Xenopus tropicalis (Western clawed frog).